We begin with the raw amino-acid sequence, 315 residues long: Type II restriction enzyme AvaI (315 aa).

The enzyme catalyses Endonucleolytic cleavage of DNA to give specific double-stranded fragments with terminal 5'-phosphates.. In terms of biological role, a P subtype restriction enzyme that recognizes the double-stranded sequence 5'-CYCGRG-3' and cleaves after C-1. The protein is Type II restriction enzyme AvaI of Anabaena variabilis.